The chain runs to 397 residues: ATP phosphoribosyltransferase regulatory subunit (397 aa).

This sequence belongs to the class-II aminoacyl-tRNA synthetase family. HisZ subfamily. As to quaternary structure, heteromultimer composed of HisG and HisZ subunits.

Its subcellular location is the cytoplasm. Its pathway is amino-acid biosynthesis; L-histidine biosynthesis; L-histidine from 5-phospho-alpha-D-ribose 1-diphosphate: step 1/9. Required for the first step of histidine biosynthesis. May allow the feedback regulation of ATP phosphoribosyltransferase activity by histidine. The chain is ATP phosphoribosyltransferase regulatory subunit from Nitrosococcus oceani (strain ATCC 19707 / BCRC 17464 / JCM 30415 / NCIMB 11848 / C-107).